Reading from the N-terminus, the 262-residue chain is Type III pantothenate kinase (262 aa).

9 to 16 (DSGNTRVK) is a binding site for ATP. Substrate-binding positions include tyrosine 93 and 100–103 (GSDR). The Proton acceptor role is filled by aspartate 102. Aspartate 122 contacts K(+). Threonine 125 is a binding site for ATP. Threonine 175 contributes to the substrate binding site.

Belongs to the type III pantothenate kinase family. As to quaternary structure, homodimer. Requires NH4(+) as cofactor. K(+) is required as a cofactor.

The protein localises to the cytoplasm. The enzyme catalyses (R)-pantothenate + ATP = (R)-4'-phosphopantothenate + ADP + H(+). It participates in cofactor biosynthesis; coenzyme A biosynthesis; CoA from (R)-pantothenate: step 1/5. In terms of biological role, catalyzes the phosphorylation of pantothenate (Pan), the first step in CoA biosynthesis. The sequence is that of Type III pantothenate kinase from Nitrosospira multiformis (strain ATCC 25196 / NCIMB 11849 / C 71).